Here is a 152-residue protein sequence, read N- to C-terminus: Gamma-glutamylaminecyclotransferase C (152 aa).

9–12 (YGSL) contacts substrate. Glu-84 acts as the Proton acceptor in catalysis.

The protein belongs to the gamma-glutamylcyclotransferase family.

It carries out the reaction epsilon-(gamma-L-glutamyl)-L-lysine = 5-oxo-L-proline + L-lysine. May contribute to degradation of proteins cross-linked by transglutaminases by degrading the cross-link between a lysine and a glutamic acid residue. Catalyzes the formation of 5-oxo-L-proline from L-gamma-glutamyl-L-epsilon-lysine. In Danio rerio (Zebrafish), this protein is Gamma-glutamylaminecyclotransferase C (ggact.3).